The following is a 128-amino-acid chain: Large ribosomal subunit protein bL17 (128 aa).

Belongs to the bacterial ribosomal protein bL17 family. In terms of assembly, part of the 50S ribosomal subunit. Contacts protein L32.

The chain is Large ribosomal subunit protein bL17 from Pseudomonas fluorescens (strain Pf0-1).